The sequence spans 391 residues: 3-ketoacyl-CoA thiolase (391 aa).

Cys-95 acts as the Acyl-thioester intermediate in catalysis. Active-site proton acceptor residues include His-347 and Cys-377.

It belongs to the thiolase-like superfamily. Thiolase family. In terms of assembly, heterotetramer of two alpha chains (FadB) and two beta chains (FadA).

The protein localises to the cytoplasm. It catalyses the reaction an acyl-CoA + acetyl-CoA = a 3-oxoacyl-CoA + CoA. It functions in the pathway lipid metabolism; fatty acid beta-oxidation. Functionally, catalyzes the final step of fatty acid oxidation in which acetyl-CoA is released and the CoA ester of a fatty acid two carbons shorter is formed. This chain is 3-ketoacyl-CoA thiolase, found in Hahella chejuensis (strain KCTC 2396).